The following is a 540-amino-acid chain: Chaperonin GroEL 3 (540 aa).

Residues 30-33 (TLGP), Lys-51, 87-91 (DGTTT), Gly-415, 479-481 (NAA), and Asp-495 each bind ATP.

It belongs to the chaperonin (HSP60) family. As to quaternary structure, forms a cylinder of 14 subunits composed of two heptameric rings stacked back-to-back. Interacts with the co-chaperonin GroES.

The protein resides in the cytoplasm. It carries out the reaction ATP + H2O + a folded polypeptide = ADP + phosphate + an unfolded polypeptide.. Its function is as follows. Together with its co-chaperonin GroES, plays an essential role in assisting protein folding. The GroEL-GroES system forms a nano-cage that allows encapsulation of the non-native substrate proteins and provides a physical environment optimized to promote and accelerate protein folding. In Burkholderia cenocepacia (strain HI2424), this protein is Chaperonin GroEL 3.